A 1161-amino-acid chain; its full sequence is PAN2-PAN3 deadenylation complex catalytic subunit pan2 (1161 aa).

WD repeat units lie at residues 20–59 (GLPT…RYTS) and 276–315 (ANVS…HFNE). The linker stretch occupies residues 316 to 452 (MSKEVEFADV…GAKLNGEAED (137 aa)). The USP domain occupies 453-822 (DPLLKYSNVE…SPCILAYQAK (370 aa)). In terms of domain architecture, Exonuclease spans 871 to 1049 (VALDTEFVDL…IEDARMALRL (179 aa)). The a divalent metal cation site is built by D874, E876, D983, and D1042. The stretch at 1009–1060 (NRRLSLRYLAWAVFKEYIQEEPADNNQGHDSIEDARMALRLWKKFQEYEDAG) is one WD 4 repeat. The interval 1092–1161 (RPGTAVTMQN…GDFFGGSPLK (70 aa)) is disordered. The segment covering 1097-1110 (VTMQNSSGRNTPST) has biased composition (polar residues). Residues 1116-1129 (AATATATTSAPATP) are compositionally biased toward low complexity. The span at 1145–1155 (TFGGPGAGDFF) shows a compositional bias: gly residues.

The protein belongs to the peptidase C19 family. PAN2 subfamily. In terms of assembly, forms a heterotrimer with an asymmetric homodimer of the regulatory subunit pan3 to form the poly(A)-nuclease (PAN) deadenylation complex. Requires a divalent metal cation as cofactor.

The protein resides in the cytoplasm. The enzyme catalyses Exonucleolytic cleavage of poly(A) to 5'-AMP.. Positively regulated by the regulatory subunit pan3. In terms of biological role, catalytic subunit of the poly(A)-nuclease (PAN) deadenylation complex, one of two cytoplasmic mRNA deadenylases involved in mRNA turnover. PAN specifically shortens poly(A) tails of RNA and the activity is stimulated by poly(A)-binding protein pab1. PAN deadenylation is followed by rapid degradation of the shortened mRNA tails by the CCR4-NOT complex. Deadenylated mRNAs are then degraded by two alternative mechanisms, namely exosome-mediated 3'-5' exonucleolytic degradation, or deadenylation-dependent mRNA decaping and subsequent 5'-3' exonucleolytic degradation by xrn1. May also be involved in post-transcriptional maturation of mRNA poly(A) tails. The polypeptide is PAN2-PAN3 deadenylation complex catalytic subunit pan2 (Neosartorya fischeri (strain ATCC 1020 / DSM 3700 / CBS 544.65 / FGSC A1164 / JCM 1740 / NRRL 181 / WB 181) (Aspergillus fischerianus)).